The sequence spans 1020 residues: Vacuolar membrane protease (1020 aa).

Residues 1–11 (MKCHNPFGFRV) lie on the Cytoplasmic side of the membrane. Residues 12 to 32 (GPVTFWTIIIYLALLVPLLWI) traverse the membrane as a helical segment. The Vacuolar segment spans residues 33–410 (HETVPPAPSS…GFAVFGLRGL (378 aa)). 3 N-linked (GlcNAc...) asparagine glycosylation sites follow: N50, N94, and N130. 2 residues coordinate Zn(2+): H191 and D203. The active-site Proton acceptor is E237. E238, E263, and H336 together coordinate Zn(2+). A helical transmembrane segment spans residues 411 to 431 (FAWSLTLLIVSPLILAILVFI). Topologically, residues 432–467 (LNRHDKLYFFSRKINVHNEGSEDPVSIGGFRGFTRF) are cytoplasmic. The chain crosses the membrane as a helical span at residues 468-488 (PIAVGFSGALTLASAFLLTKI). Residues 489–491 (NPM) lie on the Vacuolar side of the membrane. A helical transmembrane segment spans residues 492 to 512 (IVYSSEYAVWGMMLSLFYVSL). Residues 513–529 (WMTLKGSSAVRPSALQR) are Cytoplasmic-facing. A helical membrane pass occupies residues 530 to 550 (GYIHIWLFIVSWGLLIVVAVT). Over 551-561 (EDRLKIASGYP) the chain is Vacuolar. Residues 562-582 (VVFLHSALFLSTVISFLELFG) traverse the membrane as a helical segment. The Cytoplasmic portion of the chain corresponds to 583 to 690 (LTKKHDYARR…RLPGWTWILQ (108 aa)). The tract at residues 609-648 (DDALIAPDTPNDEAEDSDGEDSEHEPTETTPLRAGGDSRV) is disordered. Positions 618–631 (PNDEAEDSDGEDSE) are enriched in acidic residues. A helical transmembrane segment spans residues 691–711 (FLLLAPINVILWGQIGLFAVA). The Vacuolar segment spans residues 712–724 (ATQAGGADGGSVL). The chain crosses the membrane as a helical span at residues 725–745 (TTYLIIAVLSIVILVPLAPFI). Residues 746–750 (HRVHY) lie on the Cytoplasmic side of the membrane. The helical transmembrane segment at 751–771 (YVPIILFAAFAGTLIYNLIAF) threads the bilayer. The Vacuolar portion of the chain corresponds to 772–1020 (PFSANNRYKI…VGLVRPVKRF (249 aa)). 3 N-linked (GlcNAc...) asparagine glycosylation sites follow: N851, N868, and N873.

This sequence belongs to the peptidase M28 family. Requires Zn(2+) as cofactor.

Its subcellular location is the vacuole membrane. Functionally, may be involved in vacuolar sorting and osmoregulation. The polypeptide is Vacuolar membrane protease (Verticillium alfalfae (strain VaMs.102 / ATCC MYA-4576 / FGSC 10136) (Verticillium wilt of alfalfa)).